Consider the following 1114-residue polypeptide: Hephaestin-like protein (1114 aa).

Positions 1–26 (MMDRSNAAFVLTACFIFSQLICHVAA) are cleaved as a signal peptide. Plastocyanin-like domains follow at residues 27-210 (ITRT…LICR), 218-365 (QQSG…VTKC), 380-562 (KRTY…LLTC), 572-719 (TRKD…VNTC), 730-915 (KTRD…LIIC), and 924-1114 (TEER…LLKA). At 27–1091 (ITRTYYIAAV…KTTPKPITAA (1065 aa)) the chain is on the extracellular side. A glycan (N-linked (GlcNAc...) asparagine) is linked at Asn-121. 4 residues coordinate Cu cation: His-129, His-131, His-189, and His-191. Cys-183 and Cys-209 form a disulfide bridge. Asn-236 is a glycosylation site (N-linked (GlcNAc...) asparagine). Cysteines 284 and 365 form a disulfide. Residues His-303, Cys-346, and His-351 each contribute to the Cu cation site. 3 N-linked (GlcNAc...) asparagine glycosylation sites follow: Asn-361, Asn-478, and Asn-489. 2 disulfide bridges follow: Cys-536-Cys-562 and Cys-638-Cys-719. His-657, Cys-700, His-705, and Met-710 together coordinate Cu cation. Asn-831 carries N-linked (GlcNAc...) asparagine glycosylation. A disulfide bond links Cys-889 and Cys-915. N-linked (GlcNAc...) asparagine glycosylation occurs at Asn-944. The Cu cation site is built by His-1014, His-1017, His-1019, His-1059, Cys-1060, His-1061, His-1065, and Met-1070. The chain crosses the membrane as a helical span at residues 1092 to 1112 (SSFVTSSIFIYLSFPVLAMLL). The Cytoplasmic portion of the chain corresponds to 1113–1114 (KA).

The protein belongs to the multicopper oxidase family. The cofactor is Cu cation. As to expression, component of the acid-insoluble and acid-soluble organic matrix of the aragonitic skeleton (at protein level).

It localises to the membrane. May function as a ferroxidase and may be involved in copper transport and homeostasis. The protein is Hephaestin-like protein of Acropora millepora (Staghorn coral).